A 607-amino-acid polypeptide reads, in one-letter code: Pyruvate decarboxylase 2 (607 aa).

The disordered stretch occupies residues M1–P22. D69 and H156 together coordinate substrate. The segment at D434 to I516 is thiamine pyrophosphate binding. The Mg(2+) site is built by D484, N511, and G513. E517 serves as a coordination point for substrate.

This sequence belongs to the TPP enzyme family. In terms of assembly, homotetramer. It depends on a metal cation as a cofactor. Thiamine diphosphate serves as cofactor. Expressed at low levels in roots, shoots, flowers, siliques and seeds.

It catalyses the reaction a 2-oxocarboxylate + H(+) = an aldehyde + CO2. The polypeptide is Pyruvate decarboxylase 2 (PDC2) (Arabidopsis thaliana (Mouse-ear cress)).